The following is a 74-amino-acid chain: MSSGGLLLLLGLLTLWAEVTPISGQDRPKKPGLCPPRPQKPCVKECKNDWSCPGQQKCCNYGCIDECRDPIFVN.

The first 24 residues, 1 to 24 (MSSGGLLLLLGLLTLWAEVTPISG), serve as a signal peptide directing secretion. Residues 27-71 (RPKKPGLCPPRPQKPCVKECKNDWSCPGQQKCCNYGCIDECRDPI) form the WAP domain. 4 disulfide bridges follow: Cys34–Cys59, Cys42–Cys63, Cys46–Cys58, and Cys52–Cys67.

The protein belongs to the venom waprin family. In terms of tissue distribution, expressed by the venom gland.

The protein resides in the secreted. Its function is as follows. Damages membranes of susceptible bacteria. Has no hemolytic activity. Not toxic to mice. Does not inhibit the proteinases elastase and cathepsin G. In Demansia vestigiata (Lesser black whip snake), this protein is Veswaprin-a.